Reading from the N-terminus, the 482-residue chain is Glutamyl-tRNA(Gln) amidotransferase subunit A (482 aa).

Residues Lys-81 and Ser-156 each act as charge relay system in the active site. Catalysis depends on Ser-180, which acts as the Acyl-ester intermediate.

The protein belongs to the amidase family. GatA subfamily. In terms of assembly, heterotrimer of A, B and C subunits.

The enzyme catalyses L-glutamyl-tRNA(Gln) + L-glutamine + ATP + H2O = L-glutaminyl-tRNA(Gln) + L-glutamate + ADP + phosphate + H(+). Allows the formation of correctly charged Gln-tRNA(Gln) through the transamidation of misacylated Glu-tRNA(Gln) in organisms which lack glutaminyl-tRNA synthetase. The reaction takes place in the presence of glutamine and ATP through an activated gamma-phospho-Glu-tRNA(Gln). In Brachyspira hyodysenteriae (strain ATCC 49526 / WA1), this protein is Glutamyl-tRNA(Gln) amidotransferase subunit A.